The following is a 317-amino-acid chain: Transaldolase (317 aa).

K132 serves as the catalytic Schiff-base intermediate with substrate.

This sequence belongs to the transaldolase family. Type 1 subfamily. In terms of assembly, homodimer.

It localises to the cytoplasm. It carries out the reaction D-sedoheptulose 7-phosphate + D-glyceraldehyde 3-phosphate = D-erythrose 4-phosphate + beta-D-fructose 6-phosphate. The protein operates within carbohydrate degradation; pentose phosphate pathway; D-glyceraldehyde 3-phosphate and beta-D-fructose 6-phosphate from D-ribose 5-phosphate and D-xylulose 5-phosphate (non-oxidative stage): step 2/3. Its function is as follows. Transaldolase is important for the balance of metabolites in the pentose-phosphate pathway. The sequence is that of Transaldolase from Histophilus somni (strain 129Pt) (Haemophilus somnus).